Here is a 2496-residue protein sequence, read N- to C-terminus: Hornerin (2496 aa).

An S-100-like region spans residues 1–81 (MPKLLESIVT…TEYLLMILKL (81 aa)). 2 consecutive EF-hand domains span residues 13–48 (DVFYQYATEYGNCDMLSKEEMKELLVTEFHQILKNP) and 49–84 (DDPDTVDIIMQNLDRDHNHKVDFTEYLLMILKLTKA). Met27, Glu32, Asp62, Asp64, Asn66, Lys68, and Glu73 together coordinate Ca(2+). A s (spacer) region spans residues 82 to 98 (TKACNKIIGKDYCQASG). A disordered region spans residues 97-2496 (SGSKQKNHSH…SGQTSGCGSG (2400 aa)). A 1; truncated repeat occupies 99–145 (SKQKNHSHQHQEEQSKKETENKEQKGSISSSAGENDSYSRGSRGSNK). Residues 107-123 (QHQEEQSKKETENKEQK) are compositionally biased toward basic and acidic residues. Polar residues predominate over residues 124-134 (GSISSSAGEND). A compositionally biased stretch (basic residues) spans 144–153 (NKSKSKKLRK). 27 tandem repeats follow at residues 146–231 (SKSK…NGKH), 232–321 (GSSS…FGSS), 326–400 (SGQS…SEQY), 401–491 (GASS…SCCG), 492–577 (QSSG…SGRY), 578–668 (GASS…SGSR), 669–748 (HGSG…SGRC), 749–839 (GASS…SCCG), 840–926 (QSSG…SGRY), 927–1017 (GASS…SGSR), 1018–1097 (HGSG…SGRC), 1098–1188 (GASS…SCCG), 1189–1274 (QSSG…SGRY), 1275–1365 (GASS…SGSR), 1366–1445 (HGSG…SGRC), 1446–1536 (GASS…SCCG), 1537–1622 (QSSG…SGRY), 1623–1713 (GASS…SGSR), 1714–1793 (HGSG…SGRC), 1794–1884 (GASS…SCCG), 1885–1970 (QSSG…SGRY), 1971–2061 (GASS…SGSR), 2062–2141 (HGSG…SGRC), 2142–2232 (GASS…SGSR), 2233–2312 (HGSG…SGRY), 2313–2403 (GASS…SGSR), and 2410–2496 (QFPI…CGSG). 3 stretches are compositionally biased toward low complexity: residues 183 to 194 (SGFSNSSGNGRP), 200 to 246 (SGFP…SGHS), and 270 to 286 (RESSGSQEYSSGSSEEP). Polar residues-rich tracts occupy residues 294–319 (RKNSSTCGKNGSYSGQSTGRHQQGFG) and 326–355 (SGQSITSANHGSHSNQSSCSGTRECGSSES). Composition is skewed to low complexity over residues 362-379 (VSGSGHSSSTGKYTSTSG), 394-415 (SSGSEQYGASSGQSSGCSSGQS), and 423-448 (SGSRNSSTQSRGRSTSRESSTSQQFG). The span at 449–464 (SGSGRSSGFSQGGSGQ) shows a compositional bias: gly residues. Low complexity predominate over residues 465–565 (GRSSRGGQQG…GQTSSSTRQG (101 aa)). Phosphoserine is present on residues Ser506 and Ser508. Positions 566-576 (SGQGQASGSGR) are enriched in gly residues. 2 stretches are compositionally biased toward low complexity: residues 577 to 593 (YGASSGQTSGCGSGQST) and 600 to 625 (SGSRNSSTQSRGRSTSRESSTSQRYG). Over residues 626–641 (SGSGESSGFSQGGSGQ) the composition is skewed to gly residues. 2 stretches are compositionally biased toward low complexity: residues 642–670 (GRSSRGGQQGSFSGQTSGRSQHQSGSRHG) and 679–713 (SGQQGSHHGHSSSSGTHNSGSSQSSSTQWSHGSGS). Omega-N-methylarginine is present on Arg646. Ser716 carries the post-translational modification Phosphoserine. Low complexity predominate over residues 723–736 (GSTSGQTASSTRQG). The segment covering 737–747 (SGQGQASGSGR) has biased composition (gly residues). Low complexity-rich tracts occupy residues 748 to 764 (CGASSGQTSGCGSGQST), 771 to 796 (SGSRNSSTQSRGRSTSRESSTSQRFG), 804 to 884 (GFSQ…SRPA), and 891 to 914 (SGRSSGLGQYGSPSGQTSSSTRQG). Ser815 is subject to Phosphoserine. Over residues 915–925 (SGQGQASGSGR) the composition is skewed to gly residues. 2 stretches are compositionally biased toward low complexity: residues 926-942 (YGASSGQTSGCGSGQST) and 949-974 (SGSRNSSTQSRGRSTSRESSTSQRYG). A compositionally biased stretch (gly residues) spans 975 to 990 (SGSGESSGFSQGGSGQ). 3 stretches are compositionally biased toward low complexity: residues 991–1019 (GRSSRGGQQGSFSGQTSGRSQHQSGSRHG), 1028–1062 (SGQQGSHHGHSSSSGTHNSGSSQSSSTQWSHGSGS), and 1072–1085 (GSTSGQTASSTRQG). Residue Arg995 is modified to Omega-N-methylarginine. The span at 1086–1096 (SGQGQASGSGR) shows a compositional bias: gly residues. 3 stretches are compositionally biased toward low complexity: residues 1097–1113 (CGASSGQTSGCGSGQST), 1120–1145 (SGSRNSSTQSRGRSTSRESSTSQRFG), and 1153–1262 (GFSQ…TRQG). At Ser1229 the chain carries Phosphoserine. Residues 1263–1273 (SGQGQASGSGR) are compositionally biased toward gly residues. Positions 1281 to 1292 (TSGCRSGQSTRY) are enriched in polar residues. The segment covering 1298 to 1322 (GSRNSSTQSRGRSTSRESSTSQRYG) has biased composition (low complexity). A compositionally biased stretch (gly residues) spans 1323–1338 (SGSGESSGFSQGGSGQ). Low complexity-rich tracts occupy residues 1339–1367 (GRSSRGGQQGSFSGQTSGRNQHQSGSRHG), 1376–1410 (SGQQGSHHGHSSSSGTHNSGSSQSSSTQWSHGSGS), and 1420–1433 (GSTSGQTASSTRQG). An Omega-N-methylarginine modification is found at Arg1343. The span at 1434-1444 (SGQGQASGSGR) shows a compositional bias: gly residues. Low complexity-rich tracts occupy residues 1445–1461 (CGASSGQTSGCGSGQST), 1468–1493 (SGSRNSSTQSRGRSTSRESSTSQRFG), and 1501–1610 (GFSQ…TRQG). 2 positions are modified to phosphoserine: Ser1551 and Ser1553. A compositionally biased stretch (gly residues) spans 1611–1621 (SGQGQASGSGR). Composition is skewed to low complexity over residues 1622-1631 (YGASSGQTSG) and 1645-1670 (SGSRNSSTQSRGRSTSRESSTSQRCG). Phosphoserine is present on Ser1650. Gly residues predominate over residues 1671–1686 (SGSGESSGFSQGGSGQ). 3 stretches are compositionally biased toward low complexity: residues 1687 to 1715 (GRSSRGGQQGSFSGQTSGRSQHQSGSRHG), 1724 to 1758 (SGQQGSHHGHSSSSGTHNSGSSQSSSTQWSHGSGS), and 1768 to 1781 (GSTSGQTASSTRQG). An Omega-N-methylarginine modification is found at Arg1691. The span at 1782–1792 (SGQGQASGSGR) shows a compositional bias: gly residues. Residues 1800 to 1811 (TSGCGSDQSTRY) are compositionally biased toward polar residues. Composition is skewed to low complexity over residues 1816-1841 (SGSRNSSTQSRGRSTSRESSTSQRFG) and 1849-1958 (GFSQ…TRQG). Residues 1959-1969 (SGQGQASGSGR) show a composition bias toward gly residues. Composition is skewed to low complexity over residues 1970-1986 (YGASSGQTSGCGSGQST) and 1993-2018 (SGSRNSSTQSRGRSTSRESSTSQRYG). Ser2011 bears the Phosphoserine mark. Gly residues predominate over residues 2019–2034 (SGSGESSGFSQGGSGQ). Low complexity-rich tracts occupy residues 2035–2063 (GRSSRGGQQGSFSGQTSGRSQHQSGSRHG) and 2072–2106 (SGQQGSHHGHSSSSGTHNSGSSQSSSTQWSHGSGS). Position 2039 is an omega-N-methylarginine (Arg2039). Residues Ser2109 and Ser2124 each carry the phosphoserine modification. The segment covering 2116-2129 (GSTSGQTASSTRQG) has biased composition (low complexity). Residues 2130-2140 (SGQGQASGSGR) show a composition bias toward gly residues. Low complexity-rich tracts occupy residues 2141 to 2157 (CGASSGQTSGCGSGQST) and 2164 to 2189 (SGSRNSSTQSRGRSTSRESSTSQRYG). Positions 2190 to 2205 (SGSGESSGFSQGGSGQ) are enriched in gly residues. Low complexity-rich tracts occupy residues 2206 to 2234 (GRSSRGGQQGSFSGQTSGRSQHQSGSRHG) and 2243 to 2300 (SGQQ…TRQG). Arg2210 carries the omega-N-methylarginine modification. Residues 2301–2311 (SGQGQASGSGR) are compositionally biased toward gly residues. Composition is skewed to low complexity over residues 2312–2328 (YGASSGQTSGCGSGQST) and 2335–2360 (SGSRNSSTQSRGRSTSRESSTSQRYG). Ser2353 is modified (phosphoserine). The span at 2361 to 2376 (SGSGESSGFSQGGSGQ) shows a compositional bias: gly residues. 3 stretches are compositionally biased toward low complexity: residues 2377–2405 (GRSSRGGQQGSFSGQTSGRSQHQSGSRHG), 2414–2448 (SGQQGSHHGHSSSSGTHNSGSSQSSSTQWSHGSGS), and 2458–2471 (GSTSGQTASSTRQG). Arg2381 is subject to Omega-N-methylarginine. A compositionally biased stretch (gly residues) spans 2472 to 2482 (SGQGQASGSGR).

The protein belongs to the S100-fused protein family. In the N-terminal section; belongs to the S-100 family. Processed during the process of epidermal differentiation. Post-translationally, forms covalent cross-links mediated by transglutaminase TGM3, between glutamine and the epsilon-amino group of lysine residues (in vitro). Embryonic skin. Highest level in the adult forestomach followed by the skin. Lower levels in the tongue, esophagus. Detected in the granular and cornified layers of the mature epidermis.

It localises to the cytoplasmic granule. Component of the epidermal cornified cell envelopes. The chain is Hornerin (Hrnr) from Mus musculus (Mouse).